Consider the following 99-residue polypeptide: Malonate decarboxylase acyl carrier protein (99 aa).

O-(phosphoribosyl dephospho-coenzyme A)serine is present on Ser25.

This sequence belongs to the MdcC family. Covalently binds the prosthetic group of malonate decarboxylase.

Its subcellular location is the cytoplasm. Its function is as follows. Subunit of malonate decarboxylase, it is an acyl carrier protein to which acetyl and malonyl thioester residues are bound via a 2'-(5''-phosphoribosyl)-3'-dephospho-CoA prosthetic group and turn over during the catalytic mechanism. This is Malonate decarboxylase acyl carrier protein from Pseudomonas putida (strain W619).